Here is a 367-residue protein sequence, read N- to C-terminus: Nodulation protein NolF (367 aa).

It belongs to the membrane fusion protein (MFP) (TC 8.A.1) family.

Its function is as follows. Involved in the production of Medicago-specific nodulation signal molecule. This is Nodulation protein NolF (nolF) from Rhizobium meliloti (strain 1021) (Ensifer meliloti).